We begin with the raw amino-acid sequence, 213 residues long: von Hippel-Lindau disease tumor suppressor (213 aa).

The segment at 1-65 (MPRRAENWDE…AGRPRPVLRS (65 aa)) is disordered. The segment covering 8-54 (WDEAEVGAEEAGVEEYGPEEDGGEESGAEESGPEESGPEELGAEEEM) has biased composition (acidic residues). 8 consecutive repeat copies span residues 14 to 18 (GAEEA), 19 to 23 (GVEEY), 24 to 28 (GPEED), 29 to 33 (GGEES), 34 to 38 (GAEES), 39 to 43 (GPEES), 44 to 48 (GPEEL), and 49 to 53 (GAEEE). The tract at residues 14–53 (GAEEAGVEEYGPEEDGGEESGAEESGPEESGPEELGAEEE) is 8 X 5 AA tandem repeats of G-[PAVG]-E-E-[DAYSLE]. The interval 100–155 (TLPPGTGRRIHSYRGHLWLFRDAGTHDGLLVNQTELFVPSLNVDGQPIFANITLPV) is involved in binding to CCT complex. The segment at 157–166 (TLKERCLQVV) is interaction with Elongin BC complex.

It belongs to the VHL family. As to quaternary structure, component of the VCB (VHL-Elongin BC-CUL2) complex; this complex acts as a ubiquitin-ligase E3 and directs proteasome-dependent degradation of targeted proteins. Interacts with CUL2; this interaction is dependent on the integrity of the trimeric VCB complex. Interacts (via the beta domain) with HIF1A (via the NTAD domain); this interaction mediates degradation of HIF1A in normoxia and, in hypoxia, prevents ubiquitination and degradation of HIF1A by mediating hypoxia-induced translocation to the nucleus, a process which requires a hypoxia-dependent regulatory signal. Interacts with ADRB2; the interaction, in normoxia, is dependent on hydroxylation of ADRB2 and the subsequent VCB-mediated ubiquitination and degradation of ADRB2. Under hypoxia, hydroxylation, interaction with VHL, ubiquitination and subsequent degradation of ADRB2 are dramatically decreased. Interacts with RNF139, USP33 and JADE1. Found in a complex composed of LIMD1, VHL, EGLN1/PHD2, ELOB and CUL2. Isoform 1 and isoform 3 interact with LIMD1 (via LIM zinc-binding 2), AJUBA (via LIM domains) and WTIP (via LIM domains). Interacts with EPAS1. Interacts with CARD9. Interacts with DCUN1D1 independently of CUL2; this interaction engages DCUN1D1 in the VCB complex and triggers CUL2 neddylation and consequently cullin ring ligase (CRL) substrates polyubiquitylation. Interacts with ALAS1 (hydroxylated form). Interacts with IGFBP1. As to expression, expressed in the adult and fetal brain and kidney.

The protein resides in the cytoplasm. Its subcellular location is the cell membrane. It is found in the endoplasmic reticulum. It localises to the nucleus. Its pathway is protein modification; protein ubiquitination. In terms of biological role, involved in the ubiquitination and subsequent proteasomal degradation via the von Hippel-Lindau ubiquitination complex. Seems to act as a target recruitment subunit in the E3 ubiquitin ligase complex and recruits hydroxylated hypoxia-inducible factor (HIF) under normoxic conditions. Involved in transcriptional repression through interaction with HIF1A, HIF1AN and histone deacetylases. Ubiquitinates, in an oxygen-responsive manner, ADRB2. Acts as a negative regulator of mTORC1 by promoting ubiquitination and degradation of RPTOR. This Homo sapiens (Human) protein is von Hippel-Lindau disease tumor suppressor (VHL).